A 601-amino-acid polypeptide reads, in one-letter code: Multidrug and toxin extrusion protein 2 (601 aa).

Residues Met1–Ala62 are Cytoplasmic-facing. Residues Leu63 to Val83 form a helical membrane-spanning segment. Over Gly84–Glu95 the chain is Extracellular. The helical transmembrane segment at Leu96–Gly116 threads the bilayer. Residues Leu117–Ser145 lie on the Cytoplasmic side of the membrane. Residues Leu146–Leu166 traverse the membrane as a helical segment. Residues Leu167–Tyr182 are Extracellular-facing. The chain crosses the membrane as a helical span at residues Ala183–Leu203. Topologically, residues Gln204–Gln212 are cytoplasmic. Residues Val213–Val233 traverse the membrane as a helical segment. Topologically, residues Leu234–Ser241 are extracellular. Residues Ala242 to Leu262 form a helical membrane-spanning segment. Over Lys263–Trp281 the chain is Cytoplasmic. Residues Gly282 to Ala301 form a helical membrane-spanning segment. At Tyr302–Gln320 the chain is on the extracellular side. The helical transmembrane segment at Ala321–Val341 threads the bilayer. Residues Cys342–Ala361 are Cytoplasmic-facing. The helical transmembrane segment at Val362–Leu382 threads the bilayer. The Extracellular portion of the chain corresponds to Asn383–Gln402. Residues Val403 to Val423 form a helical membrane-spanning segment. Over Leu424 to Asn437 the chain is Cytoplasmic. The chain crosses the membrane as a helical span at residues Ala438–Met458. Arg459 is a topological domain (extracellular). Residues Ile460–Val480 form a helical membrane-spanning segment. Over Tyr481 to Arg577 the chain is Cytoplasmic. A helical transmembrane segment spans residues Gly578–Thr598. At Thr599–Tyr601 the chain is on the extracellular side.

Belongs to the multi antimicrobial extrusion (MATE) (TC 2.A.66.1) family. In terms of tissue distribution, expressed in renal cortical tissues.

Its subcellular location is the cell membrane. It localises to the apical cell membrane. The catalysed reaction is thiamine(out) + H(+)(in) = thiamine(in) + H(+)(out). It catalyses the reaction estrone 3-sulfate(in) + H(+)(out) = estrone 3-sulfate(out) + H(+)(in). The enzyme catalyses creatinine(in) + H(+)(out) = creatinine(out) + H(+)(in). Its function is as follows. Multidrug efflux pump that functions as a H(+)/organic cation antiporter. Mediates the efflux of cationic compounds, such as the model cations, tetraethylammonium (TEA) and 1-methyl-4-phenylpyridinium (MPP+), the platinum-based drug oxaliplatin or weak bases that are positively charged at physiological pH, cimetidine or the antidiabetic drug metformin. Mediates the efflux of the endogenous compounds creatinine, thiamine and estrone-3-sulfate. Plays a physiological role in the excretion of drugs, toxins and endogenous metabolites through the kidney. In Oryctolagus cuniculus (Rabbit), this protein is Multidrug and toxin extrusion protein 2 (SLC47A2).